A 229-amino-acid chain; its full sequence is Ribonuclease 3 (229 aa).

In terms of domain architecture, RNase III spans Leu5 to Asp127. Glu40 is a Mg(2+) binding site. Residue Asp44 is part of the active site. Mg(2+)-binding residues include Asp113 and Glu116. The active site involves Glu116. The region spanning Asp154–Val224 is the DRBM domain.

Belongs to the ribonuclease III family. As to quaternary structure, homodimer. The cofactor is Mg(2+).

It localises to the cytoplasm. It carries out the reaction Endonucleolytic cleavage to 5'-phosphomonoester.. Digests double-stranded RNA. Involved in the processing of primary rRNA transcript to yield the immediate precursors to the large and small rRNAs (23S and 16S). Processes some mRNAs, and tRNAs when they are encoded in the rRNA operon. Processes pre-crRNA and tracrRNA of type II CRISPR loci if present in the organism. The sequence is that of Ribonuclease 3 from Pseudomonas putida (strain ATCC 700007 / DSM 6899 / JCM 31910 / BCRC 17059 / LMG 24140 / F1).